The sequence spans 281 residues: Protein-S-isoprenylcysteine O-methyltransferase (281 aa).

The Cytoplasmic portion of the chain corresponds to 1–2 (ML). Residues 3-29 (SPAGKISLQSFTGSSLVFFVICMFNHY) traverse the membrane as a helical segment. At 30 to 35 (YGITNL) the chain is on the lumenal side. The chain crosses the membrane as a helical span at residues 36-53 (VVNTLIVFFYAVNVYFFL). Residues 54 to 58 (KFFYN) are Cytoplasmic-facing. A helical transmembrane segment spans residues 59–85 (EFAFAIAIRAAFLGLVLVLGLYIKLVA). Residues 86 to 88 (PPN) are Lumenal-facing. Residues 89-113 (IQIFGGYMSVMALFHYSEFLAIAIV) form a helical membrane-spanning segment. Residues 114–118 (QPKQV) lie on the Cytoplasmic side of the membrane. A helical transmembrane segment spans residues 119 to 149 (STDSFVINHSPQYTIAAVSSWVEFFIETYFF). Topologically, residues 150-155 (PGLKEI) are lumenal. The chain crosses the membrane as a helical span at residues 156-181 (HWLSNIGLCVCILGEVLRKTAILTAG). The Cytoplasmic segment spans residues 182–208 (SNFNHLVQCEKSSDHVLVTHGVYAWFR). Residues glutamine 189, 196–199 (HVLV), tyrosine 204, and 209–212 (HPSY) contribute to the S-adenosyl-L-methionine site. A helical membrane pass occupies residues 209 to 226 (HPSYVGWFYWSIGTQIIL). At 227–229 (INP) the chain is on the lumenal side. The chain crosses the membrane as a helical span at residues 230 to 243 (LCIPAYTLASWMFF). Residues 244–281 (KERIYIEESMLLSFFGQQYCDYQQQVGTGIPFIEGYKI) lie on the Cytoplasmic side of the membrane. Arginine 246 provides a ligand contact to substrate. An S-adenosyl-L-methionine-binding site is contributed by glutamate 250.

Belongs to the class VI-like SAM-binding methyltransferase superfamily. Isoprenylcysteine carboxyl methyltransferase family.

The protein resides in the endoplasmic reticulum membrane. It catalyses the reaction [protein]-C-terminal S-[(2E,6E)-farnesyl]-L-cysteine + S-adenosyl-L-methionine = [protein]-C-terminal S-[(2E,6E)-farnesyl]-L-cysteine methyl ester + S-adenosyl-L-homocysteine. In terms of biological role, catalyzes the post-translational methylation of isoprenylated C-terminal cysteine residues. This is Protein-S-isoprenylcysteine O-methyltransferase from Tribolium castaneum (Red flour beetle).